Reading from the N-terminus, the 354-residue chain is Protein RecA (354 aa).

67-74 lines the ATP pocket; sequence GPESSGKT. The disordered stretch occupies residues 331–354; it reads NQDSTPDFSVDDNGEGVKETNEDF. Over residues 345-354 the composition is skewed to basic and acidic residues; it reads EGVKETNEDF.

This sequence belongs to the RecA family.

The protein resides in the cytoplasm. Can catalyze the hydrolysis of ATP in the presence of single-stranded DNA, the ATP-dependent uptake of single-stranded DNA by duplex DNA, and the ATP-dependent hybridization of homologous single-stranded DNAs. It interacts with LexA causing its activation and leading to its autocatalytic cleavage. The chain is Protein RecA from Citrobacter koseri (strain ATCC BAA-895 / CDC 4225-83 / SGSC4696).